Here is a 280-residue protein sequence, read N- to C-terminus: Acetylglutamate kinase (280 aa).

Substrate is bound by residues 57–58 (GG), arginine 79, and asparagine 174.

It belongs to the acetylglutamate kinase family. ArgB subfamily.

Its subcellular location is the cytoplasm. It catalyses the reaction N-acetyl-L-glutamate + ATP = N-acetyl-L-glutamyl 5-phosphate + ADP. Its pathway is amino-acid biosynthesis; L-arginine biosynthesis; N(2)-acetyl-L-ornithine from L-glutamate: step 2/4. In terms of biological role, catalyzes the ATP-dependent phosphorylation of N-acetyl-L-glutamate. The sequence is that of Acetylglutamate kinase from Helicobacter hepaticus (strain ATCC 51449 / 3B1).